The sequence spans 266 residues: Beta-lactamase OXA-20 (266 aa).

An N-terminal signal peptide occupies residues 1–21 (MIIRFLALLFSAVVLVSLGHA). S72 acts as the Acyl-ester intermediate in catalysis. K75 is modified (N6-carboxylysine). 210–212 (KTG) contacts substrate.

Belongs to the class-D beta-lactamase family.

It carries out the reaction a beta-lactam + H2O = a substituted beta-amino acid. With respect to regulation, inhibited by clavulanic acid. In terms of biological role, this is an oxacillin-hydrolyzing beta-lactamase. This is Beta-lactamase OXA-20 (bla) from Pseudomonas aeruginosa.